Reading from the N-terminus, the 189-residue chain is Tumor protein p53-inducible protein 11 (189 aa).

Residues 1–63 (MAAKQPPPLM…FAVREPLGLR (63 aa)) lie on the Cytoplasmic side of the membrane. Position 14 is a phosphoserine (serine 14). A helical transmembrane segment spans residues 64–84 (VWQFLSAMLFSSVAIMALALP). The Extracellular portion of the chain corresponds to 85 to 108 (DQLYDAVFDGAEVTSKTPIRLYGG). The helical transmembrane segment at 109 to 129 (ALLSISLIMWNALYTAEKVII) threads the bilayer. A topological domain (cytoplasmic) is located at residue arginine 130. A helical transmembrane segment spans residues 131–151 (WTLLTEACYFGVQSLVVTATL). Topologically, residues 152 to 155 (AETG) are extracellular. The helical transmembrane segment at 156–176 (LMSLGTLLLLASRLLFVIVSI) threads the bilayer. Residues 177-189 (YYYYQVGRKPKKV) lie on the Cytoplasmic side of the membrane.

The protein localises to the membrane. The protein is Tumor protein p53-inducible protein 11 (Tp53i11) of Rattus norvegicus (Rat).